The chain runs to 700 residues: Elongation factor G (700 aa).

Residues 10–286 (TKVRNIGIMA…AVIDYLPSPL (277 aa)) form the tr-type G domain. Residues 19–26 (AHIDAGKT), 83–87 (DTPGH), and 137–140 (NKMD) contribute to the GTP site.

The protein belongs to the TRAFAC class translation factor GTPase superfamily. Classic translation factor GTPase family. EF-G/EF-2 subfamily.

It localises to the cytoplasm. In terms of biological role, catalyzes the GTP-dependent ribosomal translocation step during translation elongation. During this step, the ribosome changes from the pre-translocational (PRE) to the post-translocational (POST) state as the newly formed A-site-bound peptidyl-tRNA and P-site-bound deacylated tRNA move to the P and E sites, respectively. Catalyzes the coordinated movement of the two tRNA molecules, the mRNA and conformational changes in the ribosome. The chain is Elongation factor G from Kineococcus radiotolerans (strain ATCC BAA-149 / DSM 14245 / SRS30216).